The chain runs to 465 residues: tRNA-2-methylthio-N(6)-dimethylallyladenosine synthase (465 aa).

In terms of domain architecture, MTTase N-terminal spans 26 to 141 (MRAHIITYGC…LPEALKANER (116 aa)). 6 residues coordinate [4Fe-4S] cluster: Cys-35, Cys-71, Cys-104, Cys-173, Cys-177, and Cys-180. A Radical SAM core domain is found at 159-388 (PKGALSAHVT…IEKQKEWSYR (230 aa)). Positions 391-453 (LEWVGKTVEV…PHLLFGEVVG (63 aa)) constitute a TRAM domain.

The protein belongs to the methylthiotransferase family. MiaB subfamily. As to quaternary structure, monomer. The cofactor is [4Fe-4S] cluster.

The protein resides in the cytoplasm. It carries out the reaction N(6)-dimethylallyladenosine(37) in tRNA + (sulfur carrier)-SH + AH2 + 2 S-adenosyl-L-methionine = 2-methylsulfanyl-N(6)-dimethylallyladenosine(37) in tRNA + (sulfur carrier)-H + 5'-deoxyadenosine + L-methionine + A + S-adenosyl-L-homocysteine + 2 H(+). Catalyzes the methylthiolation of N6-(dimethylallyl)adenosine (i(6)A), leading to the formation of 2-methylthio-N6-(dimethylallyl)adenosine (ms(2)i(6)A) at position 37 in tRNAs that read codons beginning with uridine. This chain is tRNA-2-methylthio-N(6)-dimethylallyladenosine synthase, found in Thermus thermophilus (strain ATCC BAA-163 / DSM 7039 / HB27).